Consider the following 364-residue polypeptide: Caffeic acid 3-O-methyltransferase (364 aa).

Met-131–Leu-137 lines the substrate pocket. The substrate binding stretch occupies residues Ala-163–Met-181. Residues Gly-209, Asp-232, Asp-252, Met-253, and Lys-266 each coordinate S-adenosyl-L-methionine. His-270 (proton acceptor) is an active-site residue.

It belongs to the class I-like SAM-binding methyltransferase superfamily. Cation-independent O-methyltransferase family. COMT subfamily. In terms of assembly, homodimer. Confined to the vascular tissues of organs undergoing lignification such as stems and roots.

The enzyme catalyses (E)-caffeate + S-adenosyl-L-methionine = (E)-ferulate + S-adenosyl-L-homocysteine + H(+). The catalysed reaction is tricetin + 2 S-adenosyl-L-methionine = 3',5'-di-O-methyltricetin + 2 S-adenosyl-L-homocysteine + 2 H(+). It carries out the reaction luteolin + S-adenosyl-L-methionine = chrysoeriol + S-adenosyl-L-homocysteine + H(+). It catalyses the reaction tricetin + S-adenosyl-L-methionine = 3'-O-methyltricetin + S-adenosyl-L-homocysteine + H(+). It participates in aromatic compound metabolism; phenylpropanoid biosynthesis. Its function is as follows. Catalyzes the conversion of caffeic acid to ferulic acid and of 5-hydroxyferulic acid to sinapic acid. The resulting products may subsequently be converted to the corresponding alcohols that are incorporated into lignins. Can use the flavone tricetin (5,7,3',4',5'-pentahydroxyflavone) as the preferred substrate and give rise to its 3',5'-dimethyl derivative, tricin (3',5'-dimethoxy-5,7,4'-trihydroxyflavone), as the major product, and selgin to a lower extent. Tricin exhibits potential benefits for human health including relaxant effect on smooth muscle of intestinal tissues, antioxidant effect, antihistaminic activity, and growth inhibition of human malignant breast tumor cells and colon cancer cells. Can also use luteolin, quercetin and 5-hydroxyferulic acid (5HF) as substrates. This Zea mays (Maize) protein is Caffeic acid 3-O-methyltransferase.